Reading from the N-terminus, the 780-residue chain is Protein AMEIOTIC 1 (780 aa).

Disordered stretches follow at residues 32–60 and 237–327; these read KKKT…SPLS and APKE…RWSA. Positions 50-60 are enriched in polar residues; it reads DSTIQPRSPLS. Composition is skewed to basic and acidic residues over residues 263–291 and 309–327; these read EVKR…EGKK and RTVE…RWSA. The stretch at 448–547 forms a coiled coil; that stretch reads VEELTEEVNG…LEEQVTYLSS (100 aa).

The protein resides in the nucleus. It localises to the chromosome. In terms of biological role, plays a fundamental role in building the proper chromosome structure at the beginning of meiosis in male meiocytes. Required for the transition from leptotene to zygotene in meiocytes. Required for homologous chromosome pairing, and initiation and progression of meiotic recombination. Regulates meiocyte cytoskeleton organization. This is Protein AMEIOTIC 1 from Zea mays (Maize).